Here is a 49-residue protein sequence, read N- to C-terminus: uncharacterized protein (49 aa).

This is an uncharacterized protein from Treponema pallidum (strain Nichols).